A 318-amino-acid polypeptide reads, in one-letter code: Biotin synthase (318 aa).

The Radical SAM core domain occupies 36–258 (HDPREVQLCT…VATTRILFPD (223 aa)). Residues cysteine 54, cysteine 58, and cysteine 61 each contribute to the [4Fe-4S] cluster site. Positions 98, 130, 190, and 262 each coordinate [2Fe-2S] cluster.

The protein belongs to the radical SAM superfamily. Biotin synthase family. Homodimer. The cofactor is [4Fe-4S] cluster. Requires [2Fe-2S] cluster as cofactor.

The catalysed reaction is (4R,5S)-dethiobiotin + (sulfur carrier)-SH + 2 reduced [2Fe-2S]-[ferredoxin] + 2 S-adenosyl-L-methionine = (sulfur carrier)-H + biotin + 2 5'-deoxyadenosine + 2 L-methionine + 2 oxidized [2Fe-2S]-[ferredoxin]. It functions in the pathway cofactor biosynthesis; biotin biosynthesis; biotin from 7,8-diaminononanoate: step 2/2. In terms of biological role, catalyzes the conversion of dethiobiotin (DTB) to biotin by the insertion of a sulfur atom into dethiobiotin via a radical-based mechanism. The chain is Biotin synthase from Gloeobacter violaceus (strain ATCC 29082 / PCC 7421).